Here is a 78-residue protein sequence, read N- to C-terminus: NAD(P)H-quinone oxidoreductase subunit L (78 aa).

Helical transmembrane passes span 10 to 30 (LFVIGTYLFLGTLYLVFIPLG) and 48 to 68 (LLIYSLVFLFFPGLILFAPFL).

This sequence belongs to the complex I NdhL subunit family. In terms of assembly, NDH-1 can be composed of about 15 different subunits; different subcomplexes with different compositions have been identified which probably have different functions.

It localises to the cellular thylakoid membrane. The enzyme catalyses a plastoquinone + NADH + (n+1) H(+)(in) = a plastoquinol + NAD(+) + n H(+)(out). It catalyses the reaction a plastoquinone + NADPH + (n+1) H(+)(in) = a plastoquinol + NADP(+) + n H(+)(out). In terms of biological role, NDH-1 shuttles electrons from an unknown electron donor, via FMN and iron-sulfur (Fe-S) centers, to quinones in the respiratory and/or the photosynthetic chain. The immediate electron acceptor for the enzyme in this species is believed to be plastoquinone. Couples the redox reaction to proton translocation, and thus conserves the redox energy in a proton gradient. Cyanobacterial NDH-1 also plays a role in inorganic carbon-concentration. The chain is NAD(P)H-quinone oxidoreductase subunit L from Prochlorococcus marinus (strain SARG / CCMP1375 / SS120).